The primary structure comprises 1531 residues: MGVCADLGSHRWCRALSTQHNTEKSKEQQQQSQPLEIPEQRASKCRGDIDRTTTTTIPASKTLTASPAKTAAFTVKTTRRRRSRRRAEGSSICVPIRRGQGSTPTPTIQVLQFVLVSLLALLAKNAQAHNIPEDAVHITAILGEGVIFNCHVEFPNDHPVPYVLQWDKKVSETGSDLPIYIWYESYPEHIEEGYKGRVSRVSQDSPFGSASLNLTNIRESDQGWYECKVVFLNRDPKQHKNGTWFHLDVHAPPRFSVTPEDIIYVNLGDSIILNCQADGTPTPEILWYKDANPVDPSPTVGIFNDGTELRISTIRHEDIGEYTCIARNGEGQVSHTARVIIAGGAVIMVPPTNQTKLEGEKVIFSCEAKAMPGNVTVRWYREGSPVREVAALETRVTIRKDGSLIINPIKPDDSGQYLCEVTNGIGDPQSASAYLSVEYPAKVTFTPTVQYLPFRLAGVVQCYIKSSPQLQYVTWTKDKRLLEPYQMKDIVVMANGSLLFTRVNEEHQGQYACTPYNAQGTAGASGVMDVLVRKPPAFTVEPETLYQRKVGDSVEMHCDALEAEGTERPTIKWQRQEGEQLTESQRNRIKISGGNITIENLRREDFGYYQCVVSNEVATLMAVTQLVIEGTQPHAPYNITGKATESSITLQWLPGYSGGSEYKQDYTIWFREAGVNDWQTISVTPSGSTQVTINGLASGTTYEFQVVGRNVLGDGMMSKVMTVRTLEDAPAAPRNVKAATQPPDSFFQLMPDEAGPKPGPPRNVSVTEVSNGFLITWQSPLERAHIVKFYTIKYRTDAQWKTLNRGQIRPEETQYLVKNLVGGRTYYFRVLANSEKSYESSDEVKFPVPARVKHKAITAGVVGGILFFIVAIILSVCAVKICNKRKRRKQEKEFNMVACRITDARNIAANNHHLHNRSTGSISSGQVPLKNNTEHYRDYESVFIVPGHPVIIKIVQTNPNIKSNRHSHCHLHWIWPPDRCTNCHSIYSSPNLEDGDEDDGGGGRRRSVSRIQRSLDGRFVLDVEGVSKLGYSQQTLESGNVDVVDGGLFERRNSNVSQKSSSDDGGFLSRRNFITARASWRRPLVASSSQLSLQSAADSARGFLQGLLKIGAKQSAVPPNSQSYFDEAVSGARYQNVLRPYTSSNNLYGNADRSRPLHINTISGSLSQQQQLYTPSRISRIFSSSPQQLQPHHQQLLLSSGGSGAYPTHFSDLSTVYPPNSAERSSHNLSSRYRYYSQELPSLRTIQEETRRQQQQKQHPLEDHFVPLQLPSPPSWRSYYQSQASYRPRTRWYPRHHSRLFSNRQQQHEMLSPLPQLNLNLRNSMNPGGLEASPESRSSSSGFGSKNTSNHPGSTSEWRLLPPYRAPPSPPKHSGYFGGQQAQGQTPHGSYSYPRATTPPYTMAHWLEMISRLNAATDSNLPKAPCPVDVGSVDGHYEFDPATPTPSASSMLREDLNLHIDTHPYHHHTLGPLSGSLLHSHAPYGGGARKQRSLPAHLPRYDNVEVRLQAMREEFYAYRKRQAMQQMESVC.

Residues 1-858 (MGVCADLGSH…PARVKHKAIT (858 aa)) are Extracellular-facing. A disordered region spans residues 19–44 (QHNTEKSKEQQQQSQPLEIPEQRASK). Ig-like C2-type domains are found at residues 132-243 (PEDA…KNGT), 253-340 (PRFS…ARVI), 344-436 (GAVI…AYLS), 440-529 (PAKV…GVMD), and 536-624 (PAFT…MAVT). 5 disulfide bridges follow: Cys150–Cys227, Cys275–Cys324, Cys366–Cys419, Cys462–Cys513, and Cys558–Cys611. 2 consecutive Fibronectin type-III domains span residues 632 to 728 (QPHA…TLED) and 760 to 851 (PPRN…VPAR). Residues 859-879 (AGVVGGILFFIVAIILSVCAV) traverse the membrane as a helical segment. The Cytoplasmic segment spans residues 880–1531 (KICNKRKRRK…QAMQQMESVC (652 aa)). 2 disordered regions span residues 1248–1269 (EETRRQQQQKQHPLEDHFVPLQ) and 1318–1395 (NLNL…SYPR). The segment covering 1333-1349 (SPESRSSSSGFGSKNTS) has biased composition (low complexity). Positions 1380–1389 (QQAQGQTPHG) are enriched in polar residues.

It belongs to the immunoglobulin superfamily. Turtle family. Interacts with bdl. As to expression, exclusively expressed in the central nervous system.

It localises to the membrane. Essential protein that plays a role in the establishment of coordinated motor control. In the developing eye, involved in axonal targeting of the R7 photoreceptor. The sequence is that of Protein turtle (tutl) from Drosophila melanogaster (Fruit fly).